Consider the following 282-residue polypeptide: MEMO1 family protein Msm_1438 (282 aa).

The protein belongs to the MEMO1 family.

The sequence is that of MEMO1 family protein Msm_1438 from Methanobrevibacter smithii (strain ATCC 35061 / DSM 861 / OCM 144 / PS).